Consider the following 278-residue polypeptide: Acetyl-coenzyme A carboxylase carboxyl transferase subunit beta (278 aa).

Positions 23 to 278 constitute a CoA carboxyltransferase N-terminal domain; sequence LWSKCDSCGA…QLIKLLGHMK (256 aa). Residues Cys27, Cys30, Cys46, and Cys49 each contribute to the Zn(2+) site. The segment at 27–49 adopts a C4-type zinc-finger fold; that stretch reads CDSCGAALHKKQLEDHLYTCPHC.

Belongs to the AccD/PCCB family. In terms of assembly, acetyl-CoA carboxylase is a heterohexamer composed of biotin carboxyl carrier protein (AccB), biotin carboxylase (AccC) and two subunits each of ACCase subunit alpha (AccA) and ACCase subunit beta (AccD). Zn(2+) serves as cofactor.

The protein resides in the cytoplasm. It catalyses the reaction N(6)-carboxybiotinyl-L-lysyl-[protein] + acetyl-CoA = N(6)-biotinyl-L-lysyl-[protein] + malonyl-CoA. The protein operates within lipid metabolism; malonyl-CoA biosynthesis; malonyl-CoA from acetyl-CoA: step 1/1. In terms of biological role, component of the acetyl coenzyme A carboxylase (ACC) complex. Biotin carboxylase (BC) catalyzes the carboxylation of biotin on its carrier protein (BCCP) and then the CO(2) group is transferred by the transcarboxylase to acetyl-CoA to form malonyl-CoA. This chain is Acetyl-coenzyme A carboxylase carboxyl transferase subunit beta, found in Chlorobaculum tepidum (strain ATCC 49652 / DSM 12025 / NBRC 103806 / TLS) (Chlorobium tepidum).